A 232-amino-acid polypeptide reads, in one-letter code: U2 small nuclear ribonucleoprotein B'' (232 aa).

Positions 10 to 89 constitute an RRM 1 domain; it reads QSIYIQNLNE…KPMRLQYAKA (80 aa). The interval 100–157 is disordered; the sequence is TFVPKDKKRKQEEKVERKREDSQRPNTANGPSANGPSANNGVPAPSFQPSGQETMPPN. Basic and acidic residues predominate over residues 108–122; that stretch reads RKQEEKVERKREDSQ. Polar residues-rich tracts occupy residues 123 to 139 and 146 to 156; these read RPNT…SANN and FQPSGQETMPP. The 75-residue stretch at 158–232 folds into the RRM 2 domain; the sequence is NILFIQNLPH…NPMVISFAKK (75 aa).

The protein belongs to the RRM U1 A/B'' family. In terms of assembly, component of the spliceosome where it is associated with snRNP U2.

Its subcellular location is the nucleus. The protein localises to the cajal body. The protein resides in the nucleoplasm. It is found in the cytoplasm. Its function is as follows. Involved in nuclear pre-mRNA splicing. This is U2 small nuclear ribonucleoprotein B'' (U2B'') from Arabidopsis thaliana (Mouse-ear cress).